Here is a 514-residue protein sequence, read N- to C-terminus: Alpha-amylase (514 aa).

The N-terminal stretch at Met1 to Ala31 is a signal peptide. Ca(2+) contacts are provided by Asn133, Asp190, Ala212, Asp214, Asp225, Asp231, Asp233, and Asp235. Asp190 provides a ligand contact to Na(+). Residues Asp214, Asp225, and Asp231 each coordinate Na(+). The Nucleophile role is filled by Asp262. His266 serves as a coordination point for Ca(2+). The active-site Proton donor is Glu292. Positions 331, 438, and 461 each coordinate Ca(2+).

This sequence belongs to the glycosyl hydrolase 13 family. As to quaternary structure, monomer. Ca(2+) is required as a cofactor. Na(+) serves as cofactor.

Its subcellular location is the secreted. It catalyses the reaction Endohydrolysis of (1-&gt;4)-alpha-D-glucosidic linkages in polysaccharides containing three or more (1-&gt;4)-alpha-linked D-glucose units.. In Bacillus amyloliquefaciens (Bacillus velezensis), this protein is Alpha-amylase.